We begin with the raw amino-acid sequence, 380 residues long: Glucose-1-phosphate adenylyltransferase (380 aa).

Alpha-D-glucose 1-phosphate contacts are provided by residues glycine 164, 179–180 (EK), and serine 190.

Belongs to the bacterial/plant glucose-1-phosphate adenylyltransferase family. As to quaternary structure, homotetramer.

The enzyme catalyses alpha-D-glucose 1-phosphate + ATP + H(+) = ADP-alpha-D-glucose + diphosphate. The protein operates within glycan biosynthesis; glycogen biosynthesis. Involved in the biosynthesis of ADP-glucose, a building block required for the elongation reactions to produce glycogen. Catalyzes the reaction between ATP and alpha-D-glucose 1-phosphate (G1P) to produce pyrophosphate and ADP-Glc. The chain is Glucose-1-phosphate adenylyltransferase from Lacticaseibacillus casei (strain BL23) (Lactobacillus casei).